Consider the following 439-residue polypeptide: Ribosomal protein uS12 methylthiotransferase RimO (439 aa).

Residues glutamine 7–phenylalanine 122 form the MTTase N-terminal domain. Residues cysteine 16, cysteine 52, cysteine 85, cysteine 155, cysteine 159, and cysteine 162 each contribute to the [4Fe-4S] cluster site. The region spanning serine 141–lysine 369 is the Radical SAM core domain.

Belongs to the methylthiotransferase family. RimO subfamily. The cofactor is [4Fe-4S] cluster.

The protein localises to the cytoplasm. It catalyses the reaction L-aspartate(89)-[ribosomal protein uS12]-hydrogen + (sulfur carrier)-SH + AH2 + 2 S-adenosyl-L-methionine = 3-methylsulfanyl-L-aspartate(89)-[ribosomal protein uS12]-hydrogen + (sulfur carrier)-H + 5'-deoxyadenosine + L-methionine + A + S-adenosyl-L-homocysteine + 2 H(+). Its function is as follows. Catalyzes the methylthiolation of an aspartic acid residue of ribosomal protein uS12. The sequence is that of Ribosomal protein uS12 methylthiotransferase RimO from Endomicrobium trichonymphae.